Reading from the N-terminus, the 102-residue chain is MQQARVRLAGTSPDDLDDICDDVRDIADTTGVNLSGPIPLPTKTLEIPTRKSPDGEGTATWEHWEMRVHKRLIDIDADERALRQLMRIQVPNDVSIEIVLED.

The segment at 30–58 (TGVNLSGPIPLPTKTLEIPTRKSPDGEGT) is disordered.

Belongs to the universal ribosomal protein uS10 family. As to quaternary structure, part of the 30S ribosomal subunit.

Its function is as follows. Involved in the binding of tRNA to the ribosomes. In Haloquadratum walsbyi (strain DSM 16790 / HBSQ001), this protein is Small ribosomal subunit protein uS10.